A 675-amino-acid chain; its full sequence is Zeaxanthin epoxidase, chloroplastic (675 aa).

The N-terminal 25 residues, M1–S25, are a transit peptide targeting the chloroplast. Residues R92–E120 and K370–D383 contribute to the FAD site. Residues I558–G622 enclose the FHA domain.

The cofactor is FAD.

Its subcellular location is the plastid. It localises to the chloroplast thylakoid membrane. The enzyme catalyses all-trans-zeaxanthin + 4 reduced [2Fe-2S]-[ferredoxin] + 2 O2 + 4 H(+) = all-trans-violaxanthin + 4 oxidized [2Fe-2S]-[ferredoxin] + 2 H2O. It functions in the pathway plant hormone biosynthesis; abscisate biosynthesis. With respect to regulation, inhibited by diphenyleneiodonium (DPI). Its function is as follows. Converts zeaxanthin into antheraxanthin and subsequently violaxanthin. Involved in the epoxidation of zeaxanthin. This chain is Zeaxanthin epoxidase, chloroplastic, found in Spinacia oleracea (Spinach).